The following is a 236-amino-acid chain: Small ribosomal subunit protein uS2c (236 aa).

It belongs to the universal ribosomal protein uS2 family.

The protein resides in the plastid. It is found in the chloroplast. The protein is Small ribosomal subunit protein uS2c (rps2) of Ipomoea purpurea (Common morning glory).